We begin with the raw amino-acid sequence, 364 residues long: BTB/POZ and TAZ domain-containing protein 2 (364 aa).

In terms of domain architecture, BTB spans 34–106 (SDVEIVTSDN…LYSSSLTEDE (73 aa)). A Nuclear localization signal motif is present at residues 203 to 212 (RKKRRRRHRK). The segment at 215 to 316 (DLYMQLSEAM…PDSCRVPLCR (102 aa)) adopts a TAZ-type zinc-finger fold. A caM-binding region spans residues 327 to 350 (KMGEDTKWKLLVTRVVSAKAMTSL).

In terms of assembly, interacts with CUL3A. Interacts with GTE11/BET10 through the BTB domain. As to expression, preferentially expressed in young leaves and roots.

The protein resides in the nucleus. The protein localises to the cytoplasm. The protein operates within protein modification; protein ubiquitination. May act as a substrate-specific adapter of an E3 ubiquitin-protein ligase complex (CUL3-RBX1-BTB) which mediates the ubiquitination and subsequent proteasomal degradation of target proteins. Plays a key role as a component of the TAC1-mediated telomerase activation pathway certainly by targeting a telomerase repressor to degradation. Seems to occupy an integral position in a complex signaling network that perceives, integrates, and responds to multiple, and sometimes competing, signals. Enhances responses to auxin in postgermination and vegetative development. Also negatively regulates ABA- and sugar-mediated inhibition of the germination. Essential for female and male gametophyte development. The sequence is that of BTB/POZ and TAZ domain-containing protein 2 (BT2) from Arabidopsis thaliana (Mouse-ear cress).